The chain runs to 576 residues: Arginine--tRNA ligase (576 aa).

Residues 122–132 (PNVAKEMHVGH) carry the 'HIGH' region motif.

The protein belongs to the class-I aminoacyl-tRNA synthetase family. In terms of assembly, monomer.

It localises to the cytoplasm. The enzyme catalyses tRNA(Arg) + L-arginine + ATP = L-arginyl-tRNA(Arg) + AMP + diphosphate. This chain is Arginine--tRNA ligase, found in Pectobacterium carotovorum subsp. carotovorum (strain PC1).